We begin with the raw amino-acid sequence, 191 residues long: MKRYLSLALAALVLTGCVPPDSVTPTPPVTIEPVTPPDVEVPPPVDTVPQPPKVQSIDWAVSVEPLVAQMVNSDEVATGSILLVDSVKNNTNGALQTAKATAALHQVLSSNKKFVLISPQQLGVAKQTLGLSEEDSFGSRSKAIGLARYVGAQYVLYSDVSGDVKSPTIEMQLMQTQTGEIIWSGNAPVQY.

Residues 1–16 form the signal peptide; it reads MKRYLSLALAALVLTG. The N-palmitoyl cysteine moiety is linked to residue cysteine 17. Residue cysteine 17 is the site of S-diacylglycerol cysteine attachment.

It belongs to the LpoB family. As to quaternary structure, interacts with PBP1b.

It localises to the cell outer membrane. Functionally, regulator of peptidoglycan synthesis that is essential for the function of penicillin-binding protein 1B (PBP1b). This is Penicillin-binding protein activator LpoB from Yersinia pestis (strain D182038).